Consider the following 596-residue polypeptide: MSNYSVSLVGPAPWGFRLQGGKDFNMPLTISSLKDGGKAAQANVRIGDVVLSIDGINAQGMTHLEAQNKIKGCTGSLNMTLQRASAAPKPEPVPVQKGEPKEVVKPVPITSPAVSKVTSTNNMAYNKAPRPFGSVSSPKVTSIPSPSSAFTPAHATTSSHASPSPVAAVTPPLFAASGLHANANLSADQSPSALSAGKTAVNVPRQPTVTSVCSETSQELAEGQRRGSQGDSKQQNGPPRKHIVERYTEFYHVPTHSDASKKRLIEDTEDWRPRTGTTQSRSFRILAQITGTEHLKESEADNTKKANNSQEPSPQLASSVASTRSMPESLDSPTSGRPGVTSLTAAAAFKPVGSTGVIKSPSWQRPNQGVPSTGRISNSATYSGSVAPANSALGQTQPSDQDTLVQRAEHIPAGKRTPMCAHCNQVIRGPFLVALGKSWHPEEFNCAHCKNTMAYIGFVEEKGALYCELCYEKFFAPECGRCQRKILGEVISALKQTWHVSCFVCVACGKPIRNNVFHLEDGEPYCETDYYALFGTICHGCEFPIEAGDMFLEALGYTWHDTCFVCSVCCESLEGQTFFSKKDKPLCKKHAHSVNF.

N-acetylserine is present on S2. Position 2 is a phosphoserine (S2). One can recognise a PDZ domain in the interval 2–85 (SNYSVSLVGP…SLNMTLQRAS (84 aa)). K89 bears the N6-acetyllysine; alternate mark. Residue K89 is modified to N6-succinyllysine; alternate. K89 is covalently cross-linked (Glycyl lysine isopeptide (Lys-Gly) (interchain with G-Cter in SUMO2); alternate). A phosphoserine mark is found at S111, S134, and S137. Disordered stretches follow at residues 121–165 (NNMA…SPSP), 196–240 (AGKT…GPPR), and 255–340 (THSD…RPGV). Polar residues predominate over residues 134-143 (SVSSPKVTSI). The segment covering 144–165 (PSPSSAFTPAHATTSSHASPSP) has biased composition (low complexity). Composition is skewed to polar residues over residues 205-219 (RQPTVTSVCSETSQE) and 226-237 (RGSQGDSKQQNG). A phosphoserine mark is found at S228 and S260. Basic and acidic residues-rich tracts occupy residues 258–273 (DASKKRLIEDTEDWRP) and 293–304 (EHLKESEADNTK). Residues 305–335 (KANNSQEPSPQLASSVASTRSMPESLDSPTS) are compositionally biased toward polar residues. Residues S309, S313, and S322 each carry the phosphoserine modification. K350 carries the post-translational modification N6-acetyllysine. The segment at 354-381 (STGVIKSPSWQRPNQGVPSTGRISNSAT) is disordered. A phosphoserine mark is found at S360 and S362. Positions 361-381 (PSWQRPNQGVPSTGRISNSAT) are enriched in polar residues. 3 LIM zinc-binding domains span residues 418–477 (PMCA…FFAP), 477–536 (PECG…LFGT), and 536–596 (TICH…SVNF).

As to quaternary structure, interacts with various PKC isoforms through the LIM domains. Interacts with actin and alpha-actinin through the PDZ domain. Interacts (via LIM domains) with SIPA1L1/SPAR; this interaction may occur preferentially with isoform 1. In terms of tissue distribution, heart and skeletal muscle specific. Expression is commonly increased in the brain of patients with bipolar disorder, schizophrenia, and major depression.

Its subcellular location is the postsynaptic density. The protein resides in the presynapse. It is found in the postsynapse. It localises to the cytoplasm. The protein localises to the cytosol. May play an important role in the heart development by scaffolding PKC to the Z-disk region. May play a role in the regulation of cardiomyocyte expansion. Isoforms lacking the LIM domains may negatively modulate the scaffolding activity of isoform 1. Overexpression promotes the development of heart hypertrophy. Contributes to the regulation of dendritic spine morphogenesis in neurons. May be required to restrain postsynaptic growth of excitatory synapses. Isoform 1, but not isoform 2, expression favors spine thinning and elongation. This chain is PDZ and LIM domain protein 5, found in Homo sapiens (Human).